Here is a 431-residue protein sequence, read N- to C-terminus: tRNA-2-methylthio-N(6)-dimethylallyladenosine synthase (431 aa).

Residues 4–120 (RAVYIKTFGC…IENIIENQVS (117 aa)) enclose the MTTase N-terminal domain. Residues Cys-13, Cys-49, Cys-83, Cys-154, Cys-158, and Cys-161 each contribute to the [4Fe-4S] cluster site. Positions 140-367 (RKDCVKAWVN…LKLQDEITER (228 aa)) constitute a Radical SAM core domain. Positions 370-430 (KRLEGKIQEV…RHSLEGDIIS (61 aa)) constitute a TRAM domain.

Belongs to the methylthiotransferase family. MiaB subfamily. As to quaternary structure, monomer. Requires [4Fe-4S] cluster as cofactor.

Its subcellular location is the cytoplasm. The catalysed reaction is N(6)-dimethylallyladenosine(37) in tRNA + (sulfur carrier)-SH + AH2 + 2 S-adenosyl-L-methionine = 2-methylsulfanyl-N(6)-dimethylallyladenosine(37) in tRNA + (sulfur carrier)-H + 5'-deoxyadenosine + L-methionine + A + S-adenosyl-L-homocysteine + 2 H(+). In terms of biological role, catalyzes the methylthiolation of N6-(dimethylallyl)adenosine (i(6)A), leading to the formation of 2-methylthio-N6-(dimethylallyl)adenosine (ms(2)i(6)A) at position 37 in tRNAs that read codons beginning with uridine. The sequence is that of tRNA-2-methylthio-N(6)-dimethylallyladenosine synthase from Thermodesulfovibrio yellowstonii (strain ATCC 51303 / DSM 11347 / YP87).